Consider the following 264-residue polypeptide: MATKNPTKIEMRDLLQAGAHFGHQTRFWNPKMGPYIFGARNKIHIINLEHTVKAFNEALTYVNGLAAKKNKVLFVGTKRAASGVIAEQAARAGMPYVDHRWLGGMLTNWKTLRQSINRLKELEKQAEDGTFAKLTKREALERTRDMEKLERSLGGIKDMGGLPDAIFVVDVDHEAIAIKEAKNLGIPVIGIVDTNSNPDNVDYIIPANDDAIRAVTLYVTSMADAIIAGKEYAQTQAGGKAEQEAPATEEAADAQTEEAATPAE.

The disordered stretch occupies residues 233 to 264; the sequence is AQTQAGGKAEQEAPATEEAADAQTEEAATPAE.

Belongs to the universal ribosomal protein uS2 family.

The chain is Small ribosomal subunit protein uS2 from Psychrobacter arcticus (strain DSM 17307 / VKM B-2377 / 273-4).